The chain runs to 218 residues: N-(5'-phosphoribosyl)anthranilate isomerase (218 aa).

This sequence belongs to the TrpF family.

It carries out the reaction N-(5-phospho-beta-D-ribosyl)anthranilate = 1-(2-carboxyphenylamino)-1-deoxy-D-ribulose 5-phosphate. It functions in the pathway amino-acid biosynthesis; L-tryptophan biosynthesis; L-tryptophan from chorismate: step 3/5. This Bordetella pertussis (strain Tohama I / ATCC BAA-589 / NCTC 13251) protein is N-(5'-phosphoribosyl)anthranilate isomerase.